We begin with the raw amino-acid sequence, 92 residues long: RNA-binding protein Hfq (92 aa).

The Sm domain occupies 9–68 (DPFLNALRRERVPVSVYLVNGIKLQGTIESFDQFVVLLRNTVSQMVYKHAISTVVPARNV). The tract at residues 73 to 92 (GGGYVQSNEGNQAEDDDVEQ) is disordered.

Belongs to the Hfq family. Homohexamer.

In terms of biological role, RNA chaperone that binds small regulatory RNA (sRNAs) and mRNAs to facilitate mRNA translational regulation in response to envelope stress, environmental stress and changes in metabolite concentrations. Also binds with high specificity to tRNAs. This chain is RNA-binding protein Hfq, found in Xanthomonas axonopodis pv. citri (strain 306).